A 132-amino-acid polypeptide reads, in one-letter code: Large-conductance mechanosensitive channel (132 aa).

2 helical membrane passes run 10–30 (FAVK…SAFG) and 76–96 (GNFI…FLAI).

The protein belongs to the MscL family. In terms of assembly, homopentamer.

The protein resides in the cell inner membrane. Functionally, channel that opens in response to stretch forces in the membrane lipid bilayer. May participate in the regulation of osmotic pressure changes within the cell. The chain is Large-conductance mechanosensitive channel from Campylobacter hominis (strain ATCC BAA-381 / DSM 21671 / CCUG 45161 / LMG 19568 / NCTC 13146 / CH001A).